Here is a 455-residue protein sequence, read N- to C-terminus: MREVITINIGQAGCQLGNKCWELFCLEHGIQPDGTAIANSNEKRSVITGGIDTAYNAFFQELQNGRHVPRAIFVDTEPTVIDEIKTGEYSGLYHPEHLICGKEDASSNFAKGKTGYEPLLNQTMDAIRKATENCTGLQGFFIYNSVGGGTGSGFTAALCEKLADKYTKKTKLNTVIWPSPKLSSGVVEPYNAVLNTHAMMKFVNCTFMVDNESIYKICQKQLGVHSPSYFHLNQLIAQAMSSITASLRFEGTLNVDLNEFPTNLVPFPRDHFAMMSYAPIVTPEKAIRQTLSVQELTSSLFDPNSLMIQCDDINKGKFMSCCMMYRGDVSSREVNLAVSGIKKQNTVPFVGWCPCSFKCGINSQPATAVPGSSYASTARSACMIANHTAMCQVFQKVNQNFDLMFGKRAFVHHYVGEGMEENEFTDARQDLYELEVDYANLALDNTIEGESMTAQ.

GTP is bound by residues Gln11, Glu77, Ser145, Gly149, Thr150, Ser184, Asn211, and Asn233. Glu77 serves as a coordination point for Mg(2+). Glu259 is an active-site residue.

Belongs to the tubulin family. In terms of assembly, dimer of alpha and beta chains. A typical microtubule is a hollow water-filled tube with an outer diameter of 25 nm and an inner diameter of 15 nM. Alpha-beta heterodimers associate head-to-tail to form protofilaments running lengthwise along the microtubule wall with the beta-tubulin subunit facing the microtubule plus end conferring a structural polarity. Microtubules usually have 13 protofilaments but different protofilament numbers can be found in some organisms and specialized cells. The cofactor is Mg(2+).

It localises to the cytoplasm. The protein resides in the cytoskeleton. It carries out the reaction GTP + H2O = GDP + phosphate + H(+). In terms of biological role, tubulin is the major constituent of microtubules, a cylinder consisting of laterally associated linear protofilaments composed of alpha- and beta-tubulin heterodimers. Microtubules grow by the addition of GTP-tubulin dimers to the microtubule end, where a stabilizing cap forms. Below the cap, tubulin dimers are in GDP-bound state, owing to GTPase activity of alpha-tubulin. The chain is Tubulin alpha chain from Entamoeba histolytica (strain ATCC 30459 / HM-1:IMSS / ABRM).